A 130-amino-acid polypeptide reads, in one-letter code: Small ribosomal subunit protein uS9 (130 aa).

The segment at alanine 110–arginine 130 is disordered. Over residues lysine 111 to arginine 130 the composition is skewed to basic residues.

Belongs to the universal ribosomal protein uS9 family.

The chain is Small ribosomal subunit protein uS9 from Syntrophotalea carbinolica (strain DSM 2380 / NBRC 103641 / GraBd1) (Pelobacter carbinolicus).